The chain runs to 863 residues: Leucine--tRNA ligase (863 aa).

The 'HIGH' region motif lies at 42–52 (PYPSGKLHMGH). The 'KMSKS' region motif lies at 623-627 (KMSKS). Lys626 lines the ATP pocket.

The protein belongs to the class-I aminoacyl-tRNA synthetase family.

It is found in the cytoplasm. The enzyme catalyses tRNA(Leu) + L-leucine + ATP = L-leucyl-tRNA(Leu) + AMP + diphosphate. The sequence is that of Leucine--tRNA ligase from Paraburkholderia xenovorans (strain LB400).